Here is a 77-residue protein sequence, read N- to C-terminus: Large ribosomal subunit protein bL28 (77 aa).

This sequence belongs to the bacterial ribosomal protein bL28 family.

The sequence is that of Large ribosomal subunit protein bL28 from Leptothrix cholodnii (strain ATCC 51168 / LMG 8142 / SP-6) (Leptothrix discophora (strain SP-6)).